A 248-amino-acid chain; its full sequence is UDP-2,3-diacylglucosamine hydrolase (248 aa).

Mn(2+) is bound by residues D7, H9, D40, N78, and H113. A substrate-binding site is contributed by 78–79 (NR). Residues D121, S159, T163, K166, and H194 each coordinate substrate. 2 residues coordinate Mn(2+): H194 and H196.

It belongs to the LpxH family. The cofactor is Mn(2+).

The protein resides in the cell inner membrane. The catalysed reaction is UDP-2-N,3-O-bis[(3R)-3-hydroxytetradecanoyl]-alpha-D-glucosamine + H2O = 2-N,3-O-bis[(3R)-3-hydroxytetradecanoyl]-alpha-D-glucosaminyl 1-phosphate + UMP + 2 H(+). It participates in glycolipid biosynthesis; lipid IV(A) biosynthesis; lipid IV(A) from (3R)-3-hydroxytetradecanoyl-[acyl-carrier-protein] and UDP-N-acetyl-alpha-D-glucosamine: step 4/6. Its function is as follows. Hydrolyzes the pyrophosphate bond of UDP-2,3-diacylglucosamine to yield 2,3-diacylglucosamine 1-phosphate (lipid X) and UMP by catalyzing the attack of water at the alpha-P atom. Involved in the biosynthesis of lipid A, a phosphorylated glycolipid that anchors the lipopolysaccharide to the outer membrane of the cell. The polypeptide is UDP-2,3-diacylglucosamine hydrolase (Pseudomonas savastanoi pv. phaseolicola (strain 1448A / Race 6) (Pseudomonas syringae pv. phaseolicola (strain 1448A / Race 6))).